We begin with the raw amino-acid sequence, 101 residues long: Fructose-bisphosphate aldolase (101 aa).

Lys-11 serves as the catalytic Schiff-base intermediate with dihydroxyacetone-P.

Belongs to the class I fructose-bisphosphate aldolase family.

The enzyme catalyses beta-D-fructose 1,6-bisphosphate = D-glyceraldehyde 3-phosphate + dihydroxyacetone phosphate. It functions in the pathway carbohydrate degradation; glycolysis; D-glyceraldehyde 3-phosphate and glycerone phosphate from D-glucose: step 4/4. This chain is Fructose-bisphosphate aldolase, found in Lymnaea stagnalis (Great pond snail).